A 185-amino-acid chain; its full sequence is HTH-type transcriptional regulator SA2364 (185 aa).

One can recognise an HTH tetR-type domain in the interval 6-66 (KENRQRIEEI…YVIQRDLDIF (61 aa)). The H-T-H motif DNA-binding region spans 29–48 (SMNRIAKELGIGMGTLYRHF).

The protein is HTH-type transcriptional regulator SA2364 of Staphylococcus aureus (strain N315).